A 248-amino-acid polypeptide reads, in one-letter code: 3-deoxy-manno-octulosonate cytidylyltransferase (248 aa).

Belongs to the KdsB family.

It is found in the cytoplasm. It catalyses the reaction 3-deoxy-alpha-D-manno-oct-2-ulosonate + CTP = CMP-3-deoxy-beta-D-manno-octulosonate + diphosphate. It participates in nucleotide-sugar biosynthesis; CMP-3-deoxy-D-manno-octulosonate biosynthesis; CMP-3-deoxy-D-manno-octulosonate from 3-deoxy-D-manno-octulosonate and CTP: step 1/1. It functions in the pathway bacterial outer membrane biogenesis; lipopolysaccharide biosynthesis. In terms of biological role, activates KDO (a required 8-carbon sugar) for incorporation into bacterial lipopolysaccharide in Gram-negative bacteria. The sequence is that of 3-deoxy-manno-octulosonate cytidylyltransferase from Shigella flexneri.